A 247-amino-acid chain; its full sequence is MFFDVLTLFPGMFASPFADSIMGKAVKRGLVQITAHHLRDWAEGKHQITDDVPYGGGEGMVLKPEPVARALRDLRQRRPHSRVLLMTPQGKPFCQESARQLAGEESLVFVCGRYEGFDERIRSMVDDEFSLGDFVLTGGELAAMTIIDAVGRLVPGVLGNRDSAASDSYSDGLLEYAQYTRPAEFEGMKVPDVLLSGNHAAIARWRRQQQLLRTWLRRPDLLERACLSDEDRRMLQELQRQADSGEQ.

S-adenosyl-L-methionine-binding positions include glycine 112 and 131-136; that span reads LGDFVL.

The protein belongs to the RNA methyltransferase TrmD family. As to quaternary structure, homodimer.

The protein resides in the cytoplasm. It carries out the reaction guanosine(37) in tRNA + S-adenosyl-L-methionine = N(1)-methylguanosine(37) in tRNA + S-adenosyl-L-homocysteine + H(+). In terms of biological role, specifically methylates guanosine-37 in various tRNAs. The sequence is that of tRNA (guanine-N(1)-)-methyltransferase from Syntrophotalea carbinolica (strain DSM 2380 / NBRC 103641 / GraBd1) (Pelobacter carbinolicus).